Reading from the N-terminus, the 616-residue chain is Dihydroxy-acid dehydratase (616 aa).

Asp-81 is a binding site for Mg(2+). Cys-122 serves as a coordination point for [2Fe-2S] cluster. Residues Asp-123 and Lys-124 each coordinate Mg(2+). Residue Lys-124 is modified to N6-carboxylysine. Cys-195 is a [2Fe-2S] cluster binding site. Glu-491 is a Mg(2+) binding site. Ser-517 serves as the catalytic Proton acceptor.

Belongs to the IlvD/Edd family. As to quaternary structure, homodimer. The cofactor is [2Fe-2S] cluster. Requires Mg(2+) as cofactor.

The enzyme catalyses (2R)-2,3-dihydroxy-3-methylbutanoate = 3-methyl-2-oxobutanoate + H2O. It catalyses the reaction (2R,3R)-2,3-dihydroxy-3-methylpentanoate = (S)-3-methyl-2-oxopentanoate + H2O. It functions in the pathway amino-acid biosynthesis; L-isoleucine biosynthesis; L-isoleucine from 2-oxobutanoate: step 3/4. The protein operates within amino-acid biosynthesis; L-valine biosynthesis; L-valine from pyruvate: step 3/4. Functionally, functions in the biosynthesis of branched-chain amino acids. Catalyzes the dehydration of (2R,3R)-2,3-dihydroxy-3-methylpentanoate (2,3-dihydroxy-3-methylvalerate) into 2-oxo-3-methylpentanoate (2-oxo-3-methylvalerate) and of (2R)-2,3-dihydroxy-3-methylbutanoate (2,3-dihydroxyisovalerate) into 2-oxo-3-methylbutanoate (2-oxoisovalerate), the penultimate precursor to L-isoleucine and L-valine, respectively. In Escherichia coli (strain K12 / MC4100 / BW2952), this protein is Dihydroxy-acid dehydratase.